Consider the following 214-residue polypeptide: Adenylate kinase (214 aa).

10-15 (GAGKGT) is an ATP binding site. Positions 30–59 (ATGDVLRAAVKEGTPLGLEAKAAMDRGDLV) are NMP. AMP contacts are provided by residues Thr31, Arg36, 57-59 (DLV), and Gln92. Positions 126–161 (GRTTCEACQRPFFGRQPGETCTEGGVSGTLVRRKDD) are LID. Residue Arg127 coordinates ATP. AMP-binding residues include Arg158 and Arg169. Position 198 (Gly198) interacts with ATP.

Belongs to the adenylate kinase family. As to quaternary structure, monomer.

It is found in the cytoplasm. The catalysed reaction is AMP + ATP = 2 ADP. The protein operates within purine metabolism; AMP biosynthesis via salvage pathway; AMP from ADP: step 1/1. Functionally, catalyzes the reversible transfer of the terminal phosphate group between ATP and AMP. Plays an important role in cellular energy homeostasis and in adenine nucleotide metabolism. The polypeptide is Adenylate kinase (Gemmatimonas aurantiaca (strain DSM 14586 / JCM 11422 / NBRC 100505 / T-27)).